The sequence spans 294 residues: 4-hydroxy-tetrahydrodipicolinate synthase (294 aa).

Thr45 is a pyruvate binding site. The active-site Proton donor/acceptor is the Tyr133. Lys162 serves as the catalytic Schiff-base intermediate with substrate. Residue Ile204 participates in pyruvate binding.

This sequence belongs to the DapA family. As to quaternary structure, homotetramer; dimer of dimers.

It is found in the cytoplasm. It catalyses the reaction L-aspartate 4-semialdehyde + pyruvate = (2S,4S)-4-hydroxy-2,3,4,5-tetrahydrodipicolinate + H2O + H(+). Its pathway is amino-acid biosynthesis; L-lysine biosynthesis via DAP pathway; (S)-tetrahydrodipicolinate from L-aspartate: step 3/4. Is allosterically regulated by the feedback inhibitor (S)-lysine. Its function is as follows. Catalyzes the condensation of (S)-aspartate-beta-semialdehyde [(S)-ASA] and pyruvate to 4-hydroxy-tetrahydrodipicolinate (HTPA). The protein is 4-hydroxy-tetrahydrodipicolinate synthase of Agrobacterium fabrum (strain C58 / ATCC 33970) (Agrobacterium tumefaciens (strain C58)).